A 465-amino-acid polypeptide reads, in one-letter code: Sensor histidine kinase ZraS (465 aa).

Over 1 to 14 (MRFMQRSKDSLAKW) the chain is Cytoplasmic. The chain crosses the membrane as a helical span at residues 15–35 (LSAILPVVIVGLVGLFAVTVI). Residues 36–201 (RDYGRASEAD…ATQSGEKRNT (166 aa)) are Periplasmic-facing. A helical membrane pass occupies residues 202–222 (LIILFALATVLLASVLSFFWY). Residues 223-465 (RRYLRSRQLL…VNITRKDPQG (243 aa)) are Cytoplasmic-facing. Residues 251–458 (GVAHEIRNPL…TFTLWLPVNI (208 aa)) enclose the Histidine kinase domain. H254 is modified (phosphohistidine; by autocatalysis).

Post-translationally, autophosphorylated.

Its subcellular location is the cell inner membrane. It carries out the reaction ATP + protein L-histidine = ADP + protein N-phospho-L-histidine.. Activity of the ZraS/ZraR two-component system is repressed by the zinc-bound form of ZraP, which probably interacts with the periplasmic region of ZraS. Part of the Zra signaling pathway, an envelope stress response (ESR) system composed of the periplasmic accessory protein ZraP, the histidine kinase ZraS and the transcriptional regulator ZraR. The ZraPSR system contributes to antibiotic resistance and is important for membrane integrity in the presence of membrane-targeting biocides. ZraS is a member of the two-component regulatory system ZraS/ZraR. Functions as a membrane-associated sensor kinase that phosphorylates ZraR in response to high concentrations of Zn(2+) or Pb(2+) in the medium. Binds one zinc molecule with high affinity via its periplasmic domain, inducing a conformational change that is transmitted to the histidine kinase domain and leads to the activation of ZraR. The system has no direct role in zinc or copper resistance. This Escherichia coli (strain K12) protein is Sensor histidine kinase ZraS.